A 222-amino-acid polypeptide reads, in one-letter code: ATP synthase F(0) complex subunit a (222 aa).

Transmembrane regions (helical) follow at residues 7 to 27 (AFFD…AILL), 64 to 84 (WSLM…LGLL), 93 to 113 (QLTV…ILGF), 132 to 152 (FLIP…PVTL), 160 to 180 (ITAG…LLSI), and 185 to 205 (ITVT…VALI).

Belongs to the ATPase A chain family. In terms of assembly, component of the ATP synthase complex composed at least of ATP5F1A/subunit alpha, ATP5F1B/subunit beta, ATP5MC1/subunit c (homooctomer), MT-ATP6/subunit a, MT-ATP8/subunit 8, ATP5ME/subunit e, ATP5MF/subunit f, ATP5MG/subunit g, ATP5MK/subunit k, ATP5MJ/subunit j, ATP5F1C/subunit gamma, ATP5F1D/subunit delta, ATP5F1E/subunit epsilon, ATP5PF/subunit F6, ATP5PB/subunit b, ATP5PD/subunit d, ATP5PO/subunit OSCP. ATP synthase complex consists of a soluble F(1) head domain (subunits alpha(3) and beta(3)) - the catalytic core - and a membrane F(0) domain - the membrane proton channel (subunits c, a, 8, e, f, g, k and j). These two domains are linked by a central stalk (subunits gamma, delta, and epsilon) rotating inside the F1 region and a stationary peripheral stalk (subunits F6, b, d, and OSCP). Interacts with DNAJC30; interaction is direct.

Its subcellular location is the mitochondrion inner membrane. The enzyme catalyses H(+)(in) = H(+)(out). Subunit a, of the mitochondrial membrane ATP synthase complex (F(1)F(0) ATP synthase or Complex V) that produces ATP from ADP in the presence of a proton gradient across the membrane which is generated by electron transport complexes of the respiratory chain. ATP synthase complex consist of a soluble F(1) head domain - the catalytic core - and a membrane F(1) domain - the membrane proton channel. These two domains are linked by a central stalk rotating inside the F(1) region and a stationary peripheral stalk. During catalysis, ATP synthesis in the catalytic domain of F(1) is coupled via a rotary mechanism of the central stalk subunits to proton translocation. With the subunit c (ATP5MC1), forms the proton-conducting channel in the F(0) domain, that contains two crucial half-channels (inlet and outlet) that facilitate proton movement from the mitochondrial intermembrane space (IMS) into the matrix. Protons are taken up via the inlet half-channel and released through the outlet half-channel, following a Grotthuss mechanism. In Mammuthus primigenius (Siberian woolly mammoth), this protein is ATP synthase F(0) complex subunit a.